Consider the following 547-residue polypeptide: Phosphomethylpyrimidine synthase (547 aa).

The segment covering 1-15 (MTETLSKTTEPSVTT) has biased composition (polar residues). Positions 1 to 36 (MTETLSKTTEPSVTTGPIPGSSKAYREVANPDGGPS) are disordered. Residues N150, M179, Y208, H244, 264-266 (SRG), 305-308 (DGLR), and E344 each bind substrate. H348 provides a ligand contact to Zn(2+). Position 371 (Y371) interacts with substrate. Residue H412 participates in Zn(2+) binding. C492, C495, and C500 together coordinate [4Fe-4S] cluster.

This sequence belongs to the ThiC family. It depends on [4Fe-4S] cluster as a cofactor.

It carries out the reaction 5-amino-1-(5-phospho-beta-D-ribosyl)imidazole + S-adenosyl-L-methionine = 4-amino-2-methyl-5-(phosphooxymethyl)pyrimidine + CO + 5'-deoxyadenosine + formate + L-methionine + 3 H(+). It participates in cofactor biosynthesis; thiamine diphosphate biosynthesis. Its function is as follows. Catalyzes the synthesis of the hydroxymethylpyrimidine phosphate (HMP-P) moiety of thiamine from aminoimidazole ribotide (AIR) in a radical S-adenosyl-L-methionine (SAM)-dependent reaction. The sequence is that of Phosphomethylpyrimidine synthase from Mycobacterium leprae (strain Br4923).